Consider the following 180-residue polypeptide: MDLPDVAAVQHESRQLDLASSAAELHGGLCGWLSGGGADSADWLARILADTAQVAPAQGGALDQMRQATVAQLEDRDFAFELLLTEDGAPLPARTDALFDWCRAFLGGFGLAAQQRPALSEEGEEALQDLARLAQASSDDFDTAEEDDTALAEIEEFVRVAVLLLHGDCVMGPRFRQRLN.

It belongs to the UPF0149 family.

This Xanthomonas campestris pv. campestris (strain 8004) protein is UPF0149 protein XC_0904.